A 380-amino-acid polypeptide reads, in one-letter code: Succinyl-diaminopimelate desuccinylase (380 aa).

Residue H71 participates in Zn(2+) binding. D73 is an active-site residue. Residue D104 participates in Zn(2+) binding. E138 serves as the catalytic Proton acceptor. Zn(2+)-binding residues include E139, E167, and H353.

The protein belongs to the peptidase M20A family. DapE subfamily. In terms of assembly, homodimer. Requires Zn(2+) as cofactor. It depends on Co(2+) as a cofactor.

The enzyme catalyses N-succinyl-(2S,6S)-2,6-diaminopimelate + H2O = (2S,6S)-2,6-diaminopimelate + succinate. The protein operates within amino-acid biosynthesis; L-lysine biosynthesis via DAP pathway; LL-2,6-diaminopimelate from (S)-tetrahydrodipicolinate (succinylase route): step 3/3. In terms of biological role, catalyzes the hydrolysis of N-succinyl-L,L-diaminopimelic acid (SDAP), forming succinate and LL-2,6-diaminopimelate (DAP), an intermediate involved in the bacterial biosynthesis of lysine and meso-diaminopimelic acid, an essential component of bacterial cell walls. In Shewanella baltica (strain OS185), this protein is Succinyl-diaminopimelate desuccinylase.